Here is a 283-residue protein sequence, read N- to C-terminus: MEQKIVNIGDIQVANDKPFTLFAGMNVLESRDLAMQICEHYVKVTDKLGIPYVFKASFDKANRSSVHSYRGPGLEEGMKIFQELKDTFGVKIITDVHTEAQAQPVADVVDVIQLPAFLARQTDLVEAMAKTGAVINVKKPQFMSPGQVGNIVEKFAECGNDKIILCERGSCHGYDNLVVDMLGFGVMKNASKGSPIIFDVTHSLQMRDPSGAASGGRREQTVELAKAGLATGIAGLFIEAHPNPDQARCDGPSALPLDKLEPFLAQMKSLDDLIKSFENIDIK.

Belongs to the KdsA family.

The protein resides in the cytoplasm. It carries out the reaction D-arabinose 5-phosphate + phosphoenolpyruvate + H2O = 3-deoxy-alpha-D-manno-2-octulosonate-8-phosphate + phosphate. The protein operates within carbohydrate biosynthesis; 3-deoxy-D-manno-octulosonate biosynthesis; 3-deoxy-D-manno-octulosonate from D-ribulose 5-phosphate: step 2/3. Its pathway is bacterial outer membrane biogenesis; lipopolysaccharide biosynthesis. The polypeptide is 2-dehydro-3-deoxyphosphooctonate aldolase (Vibrio parahaemolyticus serotype O3:K6 (strain RIMD 2210633)).